We begin with the raw amino-acid sequence, 608 residues long: MKWVTFISLLFLFSSAYSRGVFRREAHKSEIAHRFNDVGEEHFIGLVLITFSQYLQKCPYEEHAKLVKEVTDLAKACVADESAANCDKSLHDIFGDKICALPSLRDTYGDVADCCEKKEPERNECFLHHKDDKPDLPPFARPEADVLCKAFHDDEKAFFGHYLYEVARRHPYFYAPELLYYAQKYKAILTECCEAADKGACLTPKLDALEGKSLISAAQERLRCASIQKFGDRAYKAWALVRLSQRFPKADFTDISKIVTDLTKVHKECCHGDLLECADDRADLAKYMCEHQETISSHLKECCDKPILEKAHCIYGLHNDETPAGLPAVAEEFVEDKDVCKNYEEAKDLFLGKFLYEYSRRHPDYSVVLLLRLGKAYEATLKKCCATDDPHACYAKVLDEFQPLVDEPKNLVKQNCELYEQLGDYNFQNALLVRYTKKVPQVSTPTLVEISRSLGKVGSKCCKHPEAERLPCVEDYLSVVLNRLCVLHEKTPVSEKVTKCCSESLVDRRPCFSALGPDETYVPKEFNAETFTFHADICTLPETERKIKKQTALVELVKHKPHATNDQLKTVVGEFTALLDKCCSAEDKEACFAVEGPKLVESSKATLG.

The signal sequence occupies residues 1–18 (MKWVTFISLLFLFSSAYS). Positions 19–24 (RGVFRR) are excised as a propeptide. 3 Albumin domains span residues 19–210 (RGVF…DALE), 211–403 (GKSL…EFQP), and 404–601 (LVDE…KLVE). His-27 is a Cu cation binding site. Ser-29 bears the Phosphoserine mark. Glu-30 and Asp-37 together coordinate Ca(2+). Cys-77 and Cys-86 are disulfide-bonded. Residues Ser-82 and Ser-89 each carry the phosphoserine modification. Residue His-91 participates in Zn(2+) binding. Cystine bridges form between Cys-99/Cys-115, Cys-114/Cys-125, Cys-148/Cys-193, Cys-192/Cys-201, Cys-224/Cys-270, and Cys-269/Cys-277. Thr-107 carries the post-translational modification Phosphothreonine. Lys-229 is modified (N6-succinyllysine). Position 268 (Glu-268) interacts with Ca(2+). 2 residues coordinate Zn(2+): His-271 and Asp-273. Residues Asp-273, Glu-276, Asp-279, and Asp-283 each contribute to the Ca(2+) site. Intrachain disulfides connect Cys-289-Cys-303, Cys-302-Cys-313, Cys-340-Cys-385, Cys-384-Cys-393, Cys-416-Cys-462, Cys-461-Cys-472, Cys-485-Cys-501, and Cys-500-Cys-511. Phosphoserine is present on Ser-297. Ser-443 bears the Phosphoserine mark. 2 positions are modified to phosphothreonine: Thr-444 and Thr-446. Residue Lys-460 is modified to N6-succinyllysine. A Phosphoserine modification is found at Ser-513. Intrachain disulfides connect Cys-538–Cys-583 and Cys-582–Cys-591. Lys-558 is modified (N6-methyllysine). Thr-570 is subject to Phosphothreonine. N6-succinyllysine is present on Lys-588.

It belongs to the ALB/AFP/VDB family. As to quaternary structure, interacts with FCGRT; this interaction regulates ALB homeostasis. Interacts with TASOR. In plasma, occurs in a covalently-linked complex with chromophore-bound alpha-1-microglobulin; this interaction does not prevent fatty acid binding to ALB. In terms of processing, phosphorylated by FAM20C in the extracellular medium. As to expression, plasma.

It is found in the secreted. In terms of biological role, binds water, Ca(2+), Na(+), K(+), fatty acids, hormones, bilirubin and drugs. Its main function is the regulation of the colloidal osmotic pressure of blood. Major zinc transporter in plasma, typically binds about 80% of all plasma zinc. Major calcium and magnesium transporter in plasma, binds approximately 45% of circulating calcium and magnesium in plasma. Potentially has more than two calcium-binding sites and might additionally bind calcium in a non-specific manner. The shared binding site between zinc and calcium at residue Asp-273 suggests a crosstalk between zinc and calcium transport in the blood. The rank order of affinity is zinc &gt; calcium &gt; magnesium. Binds to the bacterial siderophore enterobactin and inhibits enterobactin-mediated iron uptake of E.coli from ferric transferrin, and may thereby limit the utilization of iron and growth of enteric bacteria such as E.coli. Does not prevent iron uptake by the bacterial siderophore aerobactin. This chain is Albumin (ALB), found in Oryctolagus cuniculus (Rabbit).